Here is a 301-residue protein sequence, read N- to C-terminus: Rhodopsin (301 aa).

Residues 1–18 (LHMIHLHWYQYPPMNPMM) are Extracellular-facing. The chain crosses the membrane as a helical span at residues 19 to 43 (YPLLLVFMLITGILCLAGNFVTIWV). At 44–55 (FMNTKSLRTPAN) the chain is on the cytoplasmic side. The chain crosses the membrane as a helical span at residues 56–78 (LLVVNLAMSDFLMMFTMFPPMMI). The Extracellular portion of the chain corresponds to 79–92 (TCYYHTWTLGATFC). Cys92 and Cys169 are oxidised to a cystine. The chain crosses the membrane as a helical span at residues 93–115 (EVYAFLGNLCGCASIWTMVFITF). Residues 116–118 (DRY) carry the 'Ionic lock' involved in activated form stabilization motif. At 116-134 (DRYNVIVKGVAGEPLSTKK) the chain is on the cytoplasmic side. Residues 135–155 (ASLWILTVWVLSFTWCVAPFF) traverse the membrane as a helical segment. Over 156-182 (GWNRYVPEGNLTGCGTDYLSEDILSRS) the chain is Extracellular. Asn165 carries an N-linked (GlcNAc...) asparagine glycan. The chain crosses the membrane as a helical span at residues 183-204 (YLYIYSTWVYFLPLAITIYCYV). At 205-245 (FIIKAVAAHEKGMRDQAKKMGIKSLRNEEAQKTSAECRLAK) the chain is on the cytoplasmic side. A helical membrane pass occupies residues 246–267 (IAMTTVALWFIAWTPYLLINWV). At 268–278 (GMFARSYLSPV) the chain is on the extracellular side. A helical transmembrane segment spans residues 279–300 (YTIWGYVFAKANAVYNPIVYAI). Lys288 carries the N6-(retinylidene)lysine modification.

This sequence belongs to the G-protein coupled receptor 1 family. Opsin subfamily. In terms of assembly, homodimer. Interacts with GNAQ. In terms of processing, contains one covalently linked retinal chromophore.

It localises to the cell projection. The protein localises to the rhabdomere membrane. Its function is as follows. Photoreceptor required for image-forming vision at low light intensity. Can use both retinal and 3-dehydroretinal as visual pigment. Light-induced isomerization of 11-cis to all-trans retinal triggers a conformational change that activates signaling via G-proteins. Signaling via GNAQ probably mediates the activation of phospholipase C. The polypeptide is Rhodopsin (RHO) (Lacunicambarus ludovicianus (Painted devil crayfish)).